The chain runs to 309 residues: Ribose-phosphate pyrophosphokinase (309 aa).

ATP is bound by residues 42–44 (DEE) and 102–103 (RQ). Mg(2+) contacts are provided by His-136 and Asp-175. The active site involves Lys-199. Residues Arg-201, Asp-226, and 230 to 234 (STGGT) contribute to the D-ribose 5-phosphate site.

This sequence belongs to the ribose-phosphate pyrophosphokinase family. Class III (archaeal) subfamily. The cofactor is Mg(2+).

The protein resides in the cytoplasm. The enzyme catalyses D-ribose 5-phosphate + ATP = 5-phospho-alpha-D-ribose 1-diphosphate + AMP + H(+). It participates in metabolic intermediate biosynthesis; 5-phospho-alpha-D-ribose 1-diphosphate biosynthesis; 5-phospho-alpha-D-ribose 1-diphosphate from D-ribose 5-phosphate (route I): step 1/1. In terms of biological role, involved in the biosynthesis of the central metabolite phospho-alpha-D-ribosyl-1-pyrophosphate (PRPP) via the transfer of pyrophosphoryl group from ATP to 1-hydroxyl of ribose-5-phosphate (Rib-5-P). The protein is Ribose-phosphate pyrophosphokinase of Aeropyrum pernix (strain ATCC 700893 / DSM 11879 / JCM 9820 / NBRC 100138 / K1).